The primary structure comprises 570 residues: High-affinity hexose transporter HXT6 (570 aa).

The Cytoplasmic segment spans residues Met1–Ser60. The chain crosses the membrane as a helical span at residues Ala61 to Trp81. The Extracellular portion of the chain corresponds to Asp82–Gly116. An N-linked (GlcNAc...) asparagine glycan is attached at Asn91. Residues Leu117 to Gly137 traverse the membrane as a helical segment. The Cytoplasmic portion of the chain corresponds to Asp138–Lys143. The helical transmembrane segment at Val144–Ile164 threads the bilayer. At Asn165–Arg174 the chain is on the extracellular side. A helical transmembrane segment spans residues Ile175–Val195. The Cytoplasmic segment spans residues Ser196–Arg201. A helical membrane pass occupies residues Gly202–Thr222. Residues Asn223–Arg236 lie on the Extracellular side of the membrane. Asn228 carries an N-linked (GlcNAc...) asparagine glycan. The helical transmembrane segment at Val237–Pro257 threads the bilayer. At Glu258 to Asp340 the chain is on the cytoplasmic side. Residues Asn341–Ser357 form a helical membrane-spanning segment. At Asp358–Ser363 the chain is on the extracellular side. The helical transmembrane segment at Ile364–Val381 threads the bilayer. Over Glu382–Thr388 the chain is Cytoplasmic. A helical transmembrane segment spans residues Cys389 to Val409. Residues Thr410–Val431 lie on the Extracellular side of the membrane. The helical transmembrane segment at Phe432–Val452 threads the bilayer. Residues Ser453–Thr469 are Cytoplasmic-facing. A helical transmembrane segment spans residues Ala470–Ile490. Residue Asn491 is a topological domain, extracellular. A helical membrane pass occupies residues Phe492 to Val512. The Cytoplasmic portion of the chain corresponds to Val513 to Lys570. Lys560 participates in a covalent cross-link: Glycyl lysine isopeptide (Lys-Gly) (interchain with G-Cter in ubiquitin).

This sequence belongs to the major facilitator superfamily. Sugar transporter (TC 2.A.1.1) family.

It is found in the membrane. High-affinity glucose transporter. The protein is High-affinity hexose transporter HXT6 (HXT6) of Saccharomyces cerevisiae (strain ATCC 204508 / S288c) (Baker's yeast).